The chain runs to 365 residues: Forkhead box protein H1 (365 aa).

A disordered region spans residues 1–29 (MGPCSGSRLGPPEAESPSQPPKRRKKRYL). The segment at residues 32–128 (DKPPYTYLAM…ALRLQNTALC (97 aa)) is a DNA-binding region (fork-head). The disordered stretch occupies residues 151–215 (GRPYRPPSPP…TPPLPSSERP (65 aa)). Pro residues predominate over residues 154–164 (YRPPSPPPPPS). The SMAD-interaction domain (SID) stretch occupies residues 273–354 (LWGQLPTSYL…VSHPRDLAAP (82 aa)). Positions 277-281 (LPTSY) match the Fast/FoxH1 motif 1 (FM1) motif. The Fast/FoxH1 motif 2 (FM2) signature appears at 287–293 (PNVVMPL). The short motif at 327 to 348 (LDALFQGVPPNKSIYDVWVSHP) is the SMAD interaction motif (SIM) element.

In terms of assembly, interacts with the MH2 domains of SMAD2 and SMAD3. In terms of tissue distribution, ubiquitous.

The protein localises to the nucleus. Transcriptional activator. Recognizes and binds to the DNA sequence 5'-TGT[GT][GT]ATT-3'. Required for induction of the goosecoid (GSC) promoter by TGF-beta or activin signaling. Forms a transcriptionally active complex containing FOXH1/SMAD2/SMAD4 on a site on the GSC promoter called TARE (TGF-beta/activin response element). In Homo sapiens (Human), this protein is Forkhead box protein H1 (FOXH1).